The sequence spans 389 residues: Chalcone synthase 8 (389 aa).

Residue Cys164 is part of the active site.

This sequence belongs to the thiolase-like superfamily. Chalcone/stilbene synthases family.

It carries out the reaction (E)-4-coumaroyl-CoA + 3 malonyl-CoA + 3 H(+) = 2',4,4',6'-tetrahydroxychalcone + 3 CO2 + 4 CoA. Its pathway is secondary metabolite biosynthesis; flavonoid biosynthesis. Functionally, the primary product of this enzyme is 4,2',4',6'-tetrahydroxychalcone (also termed naringenin-chalcone or chalcone) which can under specific conditions spontaneously isomerize into naringenin. This chain is Chalcone synthase 8 (CHS8), found in Medicago sativa (Alfalfa).